The primary structure comprises 97 residues: Osteocalcin (97 aa).

The N-terminal stretch at 1–20 (MKAAALLLLAALLTFSLCRS) is a signal peptide. A propeptide spanning residues 21 to 48 (APDGSDARSAKAFISHRQRAEMVRRQKR) is cleaved from the precursor. The Gla domain occupies 49-95 (HYAQDSGVAGAPPNPLEAQREVCELSPDCDELADQIGFQEAYRRFYG). Ca(2+)-binding residues include glutamate 65, glutamate 69, glutamate 72, and aspartate 78. Glutamate 65, glutamate 69, and glutamate 72 each carry 4-carboxyglutamate. The cysteines at positions 71 and 77 are disulfide-linked.

Belongs to the osteocalcin/matrix Gla protein family. Gamma-carboxyglutamate residues are formed by vitamin K dependent carboxylation by GGCX. These residues are essential for the binding of calcium.

It localises to the secreted. Functionally, the carboxylated form is one of the main organic components of the bone matrix, which constitutes 1-2% of the total bone protein. The carboxylated form binds strongly to apatite and calcium. The polypeptide is Osteocalcin (BGLAP) (Gallus gallus (Chicken)).